Here is an 896-residue protein sequence, read N- to C-terminus: Alanine--tRNA ligase (896 aa).

The Zn(2+) site is built by H581, H585, C684, and H688.

The protein belongs to the class-II aminoacyl-tRNA synthetase family. Zn(2+) is required as a cofactor.

It localises to the cytoplasm. The catalysed reaction is tRNA(Ala) + L-alanine + ATP = L-alanyl-tRNA(Ala) + AMP + diphosphate. Its function is as follows. Catalyzes the attachment of alanine to tRNA(Ala) in a two-step reaction: alanine is first activated by ATP to form Ala-AMP and then transferred to the acceptor end of tRNA(Ala). Also edits incorrectly charged Ser-tRNA(Ala) and Gly-tRNA(Ala) via its editing domain. The polypeptide is Alanine--tRNA ligase (Renibacterium salmoninarum (strain ATCC 33209 / DSM 20767 / JCM 11484 / NBRC 15589 / NCIMB 2235)).